Consider the following 524-residue polypeptide: Tyrosine-protein kinase HCK (524 aa).

The tract at residues 1–72 (MGGRSSCEDP…NNSNSMPPGF (72 aa)) is disordered. The N-myristoyl glycine moiety is linked to residue G2. The S-palmitoyl cysteine moiety is linked to residue G3. The span at 29–38 (FLRDGSKASK) shows a compositional bias: basic and acidic residues. Position 50 is a phosphotyrosine; by autocatalysis (Y50). Positions 54-68 (PTSSSKLGPNNSNSM) are enriched in polar residues. Residues 76 to 136 (SEDTIVVALY…PSNYVARVNS (61 aa)) enclose the SH3 domain. The 98-residue stretch at 142 to 239 (WFFKGISRKD…GLCQKLSVPC (98 aa)) folds into the SH2 domain. T200 is modified (phosphothreonine). Residue Y207 is modified to Phosphotyrosine. Residues 260–513 (LQMEKKLGAG…YIQSVLDDFY (254 aa)) enclose the Protein kinase domain. ATP contacts are provided by residues 266–274 (LGAGQFGEV) and K288. Catalysis depends on D379, which acts as the Proton acceptor. Residue Y409 is modified to Phosphotyrosine; by autocatalysis. S460 bears the Phosphoserine mark. Phosphotyrosine is present on Y520.

It belongs to the protein kinase superfamily. Tyr protein kinase family. SRC subfamily. As to quaternary structure, interacts with ADAM15. Interacts with FASLG. Interacts with ARRB1 and ARRB2. Interacts with FCGR1A; the interaction may be indirect. Interacts with IL6ST. Interacts (via SH3 domain) with ELMO1. Interacts (via SH3 domain) with TP73. Interacts with YAP1. Interacts with ABL1 and ITGB1, and thereby recruits ABL1 to activated ITGB1. Interacts (via SH2 domain) with FLT3 (tyrosine phosphorylated). Interacts with CBL. Interacts with VAV1, WAS and RAPGEF1. Interacts (via SH3 domain) with WDCP. Phosphorylated on several tyrosine residues. Autophosphorylated. Becomes rapidly phosphorylated upon activation of the immunoglobulin receptors FCGR1A and FCGR2A. Phosphorylation at Tyr-409 increases kinase activity. Phosphorylation at Tyr-520 inhibits kinase activity. Kinase activity is not required for phosphorylation at Tyr-520, suggesting that this site may be a target of other kinases. Post-translationally, ubiquitinated by CBL, leading to its degradation via the proteasome. In terms of processing, isoform 2 palmitoylation at position 2 requires prior myristoylation. Palmitoylation at position 3 is required for caveolar localization of isoform 2. As to expression, expressed predominantly in cells of the myeloid and B-lymphoid lineages.

The protein resides in the cytoplasmic vesicle. It localises to the secretory vesicle. Its subcellular location is the cytoplasm. The protein localises to the cytosol. It is found in the membrane. The protein resides in the caveola. It localises to the lysosome. Its subcellular location is the cell projection. The protein localises to the podosome membrane. It is found in the cell membrane. The protein resides in the cell junction. It localises to the focal adhesion. Its subcellular location is the cytoskeleton. The protein localises to the golgi apparatus. It is found in the nucleus. It catalyses the reaction L-tyrosyl-[protein] + ATP = O-phospho-L-tyrosyl-[protein] + ADP + H(+). With respect to regulation, subject to autoinhibition, mediated by intramolecular interactions involving the SH2 and SH3 domains. Kinase activity is also regulated by phosphorylation at regulatory tyrosine residues. Phosphorylation at Tyr-409 is required for optimal activity. Phosphorylation at Tyr-520 inhibits kinase activity. Inhibited by PP1. In terms of biological role, non-receptor tyrosine-protein kinase found in hematopoietic cells that transmits signals from cell surface receptors and plays an important role in the regulation of innate immune responses, including neutrophil, monocyte, macrophage and mast cell functions, phagocytosis, cell survival and proliferation, cell adhesion and migration. Acts downstream of receptors that bind the Fc region of immunoglobulins, such as FCGR1A and FCGR2A, but also CSF3R, PLAUR, the receptors for IFNG, IL2, IL6 and IL8, and integrins, such as ITGB1 and ITGB2. During the phagocytic process, mediates mobilization of secretory lysosomes, degranulation, and activation of NADPH oxidase to bring about the respiratory burst. Plays a role in the release of inflammatory molecules. Promotes reorganization of the actin cytoskeleton and actin polymerization, formation of podosomes and cell protrusions. Inhibits TP73-mediated transcription activation and TP73-mediated apoptosis. Phosphorylates CBL in response to activation of immunoglobulin gamma Fc region receptors. Phosphorylates ADAM15, BCR, ELMO1, FCGR2A, GAB1, GAB2, RAPGEF1, STAT5B, TP73, VAV1 and WAS. The chain is Tyrosine-protein kinase HCK (Hck) from Mus musculus (Mouse).